A 131-amino-acid chain; its full sequence is Large ribosomal subunit protein bL19 (131 aa).

Belongs to the bacterial ribosomal protein bL19 family.

Its function is as follows. This protein is located at the 30S-50S ribosomal subunit interface and may play a role in the structure and function of the aminoacyl-tRNA binding site. This is Large ribosomal subunit protein bL19 from Caulobacter sp. (strain K31).